We begin with the raw amino-acid sequence, 159 residues long: ATP synthase subunit b (159 aa).

Residues valine 4–leucine 24 form a helical membrane-spanning segment.

This sequence belongs to the ATPase B chain family. As to quaternary structure, F-type ATPases have 2 components, F(1) - the catalytic core - and F(0) - the membrane proton channel. F(1) has five subunits: alpha(3), beta(3), gamma(1), delta(1), epsilon(1). F(0) has three main subunits: a(1), b(2) and c(10-14). The alpha and beta chains form an alternating ring which encloses part of the gamma chain. F(1) is attached to F(0) by a central stalk formed by the gamma and epsilon chains, while a peripheral stalk is formed by the delta and b chains.

It is found in the cell inner membrane. Functionally, f(1)F(0) ATP synthase produces ATP from ADP in the presence of a proton or sodium gradient. F-type ATPases consist of two structural domains, F(1) containing the extramembraneous catalytic core and F(0) containing the membrane proton channel, linked together by a central stalk and a peripheral stalk. During catalysis, ATP synthesis in the catalytic domain of F(1) is coupled via a rotary mechanism of the central stalk subunits to proton translocation. Its function is as follows. Component of the F(0) channel, it forms part of the peripheral stalk, linking F(1) to F(0). This is ATP synthase subunit b from Acidithiobacillus ferrooxidans (strain ATCC 23270 / DSM 14882 / CIP 104768 / NCIMB 8455) (Ferrobacillus ferrooxidans (strain ATCC 23270)).